A 498-amino-acid chain; its full sequence is ATP synthase subunit beta, chloroplastic (498 aa).

Residue 172–179 (GGAGVGKT) participates in ATP binding.

It belongs to the ATPase alpha/beta chains family. F-type ATPases have 2 components, CF(1) - the catalytic core - and CF(0) - the membrane proton channel. CF(1) has five subunits: alpha(3), beta(3), gamma(1), delta(1), epsilon(1). CF(0) has four main subunits: a(1), b(1), b'(1) and c(9-12).

The protein localises to the plastid. It is found in the chloroplast thylakoid membrane. It catalyses the reaction ATP + H2O + 4 H(+)(in) = ADP + phosphate + 5 H(+)(out). Produces ATP from ADP in the presence of a proton gradient across the membrane. The catalytic sites are hosted primarily by the beta subunits. This Canella winterana (Wild cinnamon) protein is ATP synthase subunit beta, chloroplastic.